The chain runs to 411 residues: Putative nickel insertion protein (411 aa).

Belongs to the LarC family.

The protein is Putative nickel insertion protein of Acaryochloris marina (strain MBIC 11017).